The following is a 351-amino-acid chain: Cysteine-rich receptor-like protein kinase 45 (351 aa).

A Protein kinase domain is found at 37-287 (NDFSELVGRG…EILRYIHIAL (251 aa)). ATP-binding positions include 43–51 (VGRGGFGFV) and Lys65. Position 110 is a phosphotyrosine (Tyr110). Residue Asp162 is the Proton acceptor of the active site. Residues Thr197 and Thr202 each carry the phosphothreonine modification. Tyr210 is modified (phosphotyrosine).

It belongs to the protein kinase superfamily. Ser/Thr protein kinase family. CRK subfamily. In terms of assembly, interacts with CRK36. In terms of processing, autophosphorylated and phosphorylated by CRK36.

Its subcellular location is the cytoplasm. It is found in the cytosol. It carries out the reaction L-seryl-[protein] + ATP = O-phospho-L-seryl-[protein] + ADP + H(+). The enzyme catalyses L-threonyl-[protein] + ATP = O-phospho-L-threonyl-[protein] + ADP + H(+). Forms a complex with CRK36 that may negatively control abscisic acid (ABA) and osmotic stress signal transduction. Involved in plant response to ABA during seed germination, early seedling growth and responses to abiotic stresses by inducing the expression of ABA-responsive genes and stress-inducible genes. Acts as a positive regulator in disease resistance, downstream of NPR1 and WRKY70. The chain is Cysteine-rich receptor-like protein kinase 45 from Arabidopsis thaliana (Mouse-ear cress).